Consider the following 1357-residue polypeptide: DNA-directed RNA polymerase subunit beta (1357 aa).

The protein belongs to the RNA polymerase beta chain family. The RNAP catalytic core consists of 2 alpha, 1 beta, 1 beta' and 1 omega subunit. When a sigma factor is associated with the core the holoenzyme is formed, which can initiate transcription.

It catalyses the reaction RNA(n) + a ribonucleoside 5'-triphosphate = RNA(n+1) + diphosphate. Functionally, DNA-dependent RNA polymerase catalyzes the transcription of DNA into RNA using the four ribonucleoside triphosphates as substrates. The chain is DNA-directed RNA polymerase subunit beta from Pseudomonas fluorescens (strain Pf0-1).